The primary structure comprises 456 residues: Histidine--tRNA ligase (456 aa).

It belongs to the class-II aminoacyl-tRNA synthetase family. As to quaternary structure, homodimer.

It is found in the cytoplasm. It catalyses the reaction tRNA(His) + L-histidine + ATP = L-histidyl-tRNA(His) + AMP + diphosphate + H(+). This chain is Histidine--tRNA ligase (hisS), found in Borreliella burgdorferi (strain ATCC 35210 / DSM 4680 / CIP 102532 / B31) (Borrelia burgdorferi).